The following is a 255-amino-acid chain: Indole-3-glycerol phosphate synthase (255 aa).

The protein belongs to the TrpC family.

The catalysed reaction is 1-(2-carboxyphenylamino)-1-deoxy-D-ribulose 5-phosphate + H(+) = (1S,2R)-1-C-(indol-3-yl)glycerol 3-phosphate + CO2 + H2O. It functions in the pathway amino-acid biosynthesis; L-tryptophan biosynthesis; L-tryptophan from chorismate: step 4/5. The polypeptide is Indole-3-glycerol phosphate synthase (Streptococcus sanguinis (strain SK36)).